The following is a 476-amino-acid chain: Protein EARLY HEADING DATE 2 (476 aa).

Positions 1–13 (MLLSDLSSDQEAT) are enriched in polar residues. A disordered region spans residues 1 to 27 (MLLSDLSSDQEATGSNSHGGGGGGDRM). 2 C2H2-type zinc fingers span residues 106 to 128 (FVCE…RRGH) and 156 to 186 (YVCP…SRKH). 2 short sequence motifs (nuclear localization signal) span residues 124–131 (HRRGHNLP) and 178–185 (IKKHFSRK). The segment at 191-214 (WRCERCGKRYAVHSDWKAHVKNCG) adopts a C2H2-type 2; degenerate zinc-finger fold. Positions 193, 196, 209, 213, 220, 222, 235, and 239 each coordinate Zn(2+). The segment at 218 to 241 (YRCDCGILFSRKDSLLTHRAFCDA) adopts a CCHC-type 2; atypical zinc-finger fold. Positions 228-240 (RKDSLLTHRAFCD) are SHR-binding.

The protein resides in the nucleus. Its function is as follows. Transcription activator that acts as a flowering master switch in both long and short days, independently of the circadian clock. Promotes flowering upstream of HD1 by up-regulating FTL1, FTL4, FTL5, FTL6, EHD1, HD3A and RFT1. Seems to repress FTL11 expression. May recognize the consensus motif 5'-TTTGTCGTAAT-3' in target gene promoters. This is Protein EARLY HEADING DATE 2 from Oryza sativa subsp. indica (Rice).